The following is a 531-amino-acid chain: 2,3-bisphosphoglycerate-independent phosphoglycerate mutase (531 aa).

D15 and S65 together coordinate Mn(2+). The active-site Phosphoserine intermediate is the S65. Substrate is bound by residues H126, R155–D156, R187, R193, R257–R260, and K330. The Mn(2+) site is built by D397, H401, D438, H439, and H456.

This sequence belongs to the BPG-independent phosphoglycerate mutase family. In terms of assembly, monomer. The cofactor is Mn(2+).

The catalysed reaction is (2R)-2-phosphoglycerate = (2R)-3-phosphoglycerate. The protein operates within carbohydrate degradation; glycolysis; pyruvate from D-glyceraldehyde 3-phosphate: step 3/5. Its function is as follows. Catalyzes the interconversion of 2-phosphoglycerate and 3-phosphoglycerate. The chain is 2,3-bisphosphoglycerate-independent phosphoglycerate mutase from Thermosynechococcus vestitus (strain NIES-2133 / IAM M-273 / BP-1).